The sequence spans 277 residues: 2-dehydro-3-deoxyphosphooctonate aldolase (277 aa).

The protein belongs to the KdsA family.

It localises to the cytoplasm. The catalysed reaction is D-arabinose 5-phosphate + phosphoenolpyruvate + H2O = 3-deoxy-alpha-D-manno-2-octulosonate-8-phosphate + phosphate. The protein operates within carbohydrate biosynthesis; 3-deoxy-D-manno-octulosonate biosynthesis; 3-deoxy-D-manno-octulosonate from D-ribulose 5-phosphate: step 2/3. It participates in bacterial outer membrane biogenesis; lipopolysaccharide biosynthesis. The polypeptide is 2-dehydro-3-deoxyphosphooctonate aldolase (Vesicomyosocius okutanii subsp. Calyptogena okutanii (strain HA)).